Consider the following 863-residue polypeptide: Transforming growth factor-beta receptor-associated protein 1 homolog (863 aa).

Residues 23-297 enclose the CNH domain; it reads RINIECIECC…QLLQDFEGKV (275 aa). Residues 564–729 form a CHCR repeat; it reads RPTSEERRGQ…LLSVYLDPDV (166 aa).

This sequence belongs to the TRAP1 family. As to quaternary structure, component of the putative class C core vacuole/endosome tethering (CORVET) complex.

It localises to the cytoplasm. Its subcellular location is the early endosome. Plays a role in the TGF-beta signaling pathway. Functionally, plays a role in vesicle-mediated protein trafficking of the endocytic membrane transport pathway. Believed to act as a component of the putative CORVET endosomal tethering complexes which is proposed to be involved in the Rab5-to-Rab7 endosome conversion probably implicating MON1A/B, and via binding SNAREs and SNARE complexes to mediate tethering and docking events during SNARE-mediated membrane fusion. The CORVET complex is proposed to function as a Rab5 effector to mediate early endosome fusion probably in specific endosome subpopulations. The sequence is that of Transforming growth factor-beta receptor-associated protein 1 homolog (tgfbrap1) from Danio rerio (Zebrafish).